The following is a 664-amino-acid chain: Translation factor GUF1, mitochondrial (664 aa).

A tr-type G domain is found at 63–246; it reads SNYRNFSIVA…SIINNIPPPQ (184 aa). GTP-binding positions include 72 to 79, 139 to 143, and 193 to 196; these read AHVDHGKS, DTPGH, and NKID.

Belongs to the TRAFAC class translation factor GTPase superfamily. Classic translation factor GTPase family. LepA subfamily.

The protein localises to the mitochondrion inner membrane. The catalysed reaction is GTP + H2O = GDP + phosphate + H(+). In terms of biological role, promotes mitochondrial protein synthesis. May act as a fidelity factor of the translation reaction, by catalyzing a one-codon backward translocation of tRNAs on improperly translocated ribosomes. Binds to mitochondrial ribosomes in a GTP-dependent manner. The polypeptide is Translation factor GUF1, mitochondrial (Clavispora lusitaniae (strain ATCC 42720) (Yeast)).